Reading from the N-terminus, the 474-residue chain is Melanopsin (474 aa).

At 1 to 72 (MNSPSESRVP…VDVPDHAHYT (72 aa)) the chain is on the extracellular side. Residues Asn31 and Asn35 are each glycosylated (N-linked (GlcNAc...) asparagine). Residues 73-93 (LGTVILLVGLTGMLGNLTVIY) traverse the membrane as a helical segment. Residues 94–107 (TFCRNRGLRTPANM) lie on the Cytoplasmic side of the membrane. A helical membrane pass occupies residues 108-128 (LIINLAVSDFLMSFTQAPVFF). The Extracellular portion of the chain corresponds to 129–144 (ASSLYKKWLFGETGCK). Cys143 and Cys221 form a disulfide bridge. A helical membrane pass occupies residues 145-165 (FYAFCGAVFGIVSMITLTAIA). Residues 166 to 188 (MDRYLVITRPLATIGMRSKRRTA) are Cytoplasmic-facing. A helical transmembrane segment spans residues 189–209 (LVLLGVWLYALAWSLPPFFGW). At 210 to 238 (SAYVPEGLLTSCSWDYVTFTPLVRAYTML) the chain is on the extracellular side. The chain crosses the membrane as a helical span at residues 239–259 (LFCFVFFLPLLIIIFCYIFIF). The Cytoplasmic segment spans residues 260-293 (RAIRETGRACEGCGESPLRRRQWQRLQSEWKMAK). The chain crosses the membrane as a helical span at residues 294-314 (VALIVILLFVLSWAPYSTVAL). The Extracellular segment spans residues 315-355 (VGFAGYSHILTPYMSSVPAVIAKASAIHNPIIYAITHPKYR). Position 337 is an N6-(retinylidene)lysine (Lys337). A helical membrane pass occupies residues 356-372 (AAIAQHLPCLGVLLGVS). Over 373-474 (GQRSHPSLSY…RHLPSLDRRM (102 aa)) the chain is Cytoplasmic. The tract at residues 428 to 474 (AAQQASGQSFCSHDLEDGEVKAPSSPQEQKSKTPKTKRHLPSLDRRM) is disordered.

The protein belongs to the G-protein coupled receptor 1 family. Opsin subfamily. In terms of tissue distribution, eye; expressed in a photosensitive subset of retinal ganglion cells (at protein level).

It localises to the cell membrane. It is found in the cell projection. The protein localises to the axon. The protein resides in the dendrite. Its subcellular location is the perikaryon. In terms of biological role, photoreceptor that binds cis-retinaldehydes. Contributes to pupillar reflex, photoentrainment and other non-image forming responses to light. May be involved in the optokinetic visual tracking response. May be involved in the regulation of retinal hyaloid vessel growth and regression. The protein is Melanopsin of Rattus norvegicus (Rat).